Consider the following 909-residue polypeptide: Myb-like protein Q (909 aa).

3 disordered regions span residues 15 to 65 (TTNN…QQQQ), 84 to 149 (QQQN…QQIL), and 216 to 280 (SAPS…KGPW). Low complexity predominate over residues 17 to 46 (NNNSNNNNNNNNNNNNNNNNNNNNNINQNH). Positions 47–56 (QHQHQHHHHQ) are enriched in basic residues. Low complexity predominate over residues 84 to 126 (QQQNYGESTTSTSMIPPSITTSLTPLTPTLSSQPQNIQQQQQQ). Positions 127–139 (QHHHQQQHHHHHQ) are enriched in basic residues. A compositionally biased stretch (polar residues) spans 216-226 (SAPSTPLSMSP). HTH myb-type domains are found at residues 272-327 (SPGI…SPEV) and 328-378 (RKTN…LKKI). 2 DNA-binding regions (H-T-H motif) span residues 300–323 (WSSI…FNHL) and 351–374 (WTAI…NSTL). The segment covering 379-389 (GGDSKSLNKEK) has biased composition (basic and acidic residues). Disordered regions lie at residues 379–482 (GGDS…NTAI), 497–531 (QTTP…QTQQ), 616–642 (SMEQ…QQQQ), 672–748 (YQQQ…HPIE), and 826–855 (LNTT…IPTP). Over residues 390–401 (DDDDDDDEDAED) the composition is skewed to acidic residues. 2 stretches are compositionally biased toward low complexity: residues 415-431 (SSSS…TNSS) and 444-482 (STTT…NTAI). The segment covering 497 to 508 (QTTPNSSPSLSS) has biased composition (polar residues). Composition is skewed to low complexity over residues 622 to 642 (YQQQ…QQQQ), 672 to 726 (YQQQ…QQQQ), 733 to 744 (NSNNTDTTFSNS), and 826 to 851 (LNTT…NNNN).

It is found in the nucleus. This Dictyostelium discoideum (Social amoeba) protein is Myb-like protein Q (mybQ).